A 113-amino-acid polypeptide reads, in one-letter code: Large ribosomal subunit protein uL22 (113 aa).

The protein belongs to the universal ribosomal protein uL22 family. As to quaternary structure, part of the 50S ribosomal subunit.

Functionally, this protein binds specifically to 23S rRNA; its binding is stimulated by other ribosomal proteins, e.g. L4, L17, and L20. It is important during the early stages of 50S assembly. It makes multiple contacts with different domains of the 23S rRNA in the assembled 50S subunit and ribosome. Its function is as follows. The globular domain of the protein is located near the polypeptide exit tunnel on the outside of the subunit, while an extended beta-hairpin is found that lines the wall of the exit tunnel in the center of the 70S ribosome. This is Large ribosomal subunit protein uL22 from Opitutus terrae (strain DSM 11246 / JCM 15787 / PB90-1).